Here is a 158-residue protein sequence, read N- to C-terminus: Small ribosomal subunit protein bS6 (158 aa).

The tract at residues 98 to 158 is disordered; that stretch reads EAPSAPLARR…DRDEDQNEEN (61 aa). Basic and acidic residues-rich tracts occupy residues 106–117 and 127–150; these read RRGEDRDRDRGF and DSGRRRGADDREEYRARDEYRSDR.

Belongs to the bacterial ribosomal protein bS6 family.

Binds together with bS18 to 16S ribosomal RNA. In Acidiphilium cryptum (strain JF-5), this protein is Small ribosomal subunit protein bS6.